The chain runs to 107 residues: Late histone H2B.L4 (107 aa).

Serine 94 is a glycosylation site (O-linked (GlcNAc) serine). A Glycyl lysine isopeptide (Lys-Gly) (interchain with G-Cter in ubiquitin) cross-link involves residue lysine 102.

This sequence belongs to the histone H2B family. In terms of assembly, the nucleosome is a histone octamer containing two molecules each of H2A, H2B, H3 and H4 assembled in one H3-H4 heterotetramer and two H2A-H2B heterodimers. The octamer wraps approximately 147 bp of DNA. In terms of processing, monoubiquitination gives a specific tag for epigenetic transcriptional activation and is also prerequisite for histone H3 'Lys-4' and 'Lys-79' methylation. Post-translationally, glcNAcylation at Ser-94 promotes monoubiquitination of Lys-102. It fluctuates in response to extracellular glucose, and associates with transcribed genes.

Its subcellular location is the nucleus. The protein localises to the chromosome. In terms of biological role, core component of nucleosome. Nucleosomes wrap and compact DNA into chromatin, limiting DNA accessibility to the cellular machineries which require DNA as a template. Histones thereby play a central role in transcription regulation, DNA repair, DNA replication and chromosomal stability. DNA accessibility is regulated via a complex set of post-translational modifications of histones, also called histone code, and nucleosome remodeling. This Strongylocentrotus purpuratus (Purple sea urchin) protein is Late histone H2B.L4.